The sequence spans 132 residues: Acetylcholinesterase (132 aa).

Asn-37 carries N-linked (GlcNAc...) asparagine glycosylation. Cys-45 and Cys-72 are disulfide-bonded.

The protein belongs to the type-B carboxylesterase/lipase family.

It localises to the synapse. The protein localises to the secreted. It is found in the cell membrane. The catalysed reaction is acetylcholine + H2O = choline + acetate + H(+). Its function is as follows. Rapidly hydrolyzes choline released into the synapse. The chain is Acetylcholinesterase (ACE-1) from Culex pipiens pipiens (Northern house mosquito).